We begin with the raw amino-acid sequence, 323 residues long: Methionyl-tRNA formyltransferase (323 aa).

Serine 121–proline 124 serves as a coordination point for (6S)-5,6,7,8-tetrahydrofolate.

This sequence belongs to the Fmt family.

It catalyses the reaction L-methionyl-tRNA(fMet) + (6R)-10-formyltetrahydrofolate = N-formyl-L-methionyl-tRNA(fMet) + (6S)-5,6,7,8-tetrahydrofolate + H(+). Functionally, attaches a formyl group to the free amino group of methionyl-tRNA(fMet). The formyl group appears to play a dual role in the initiator identity of N-formylmethionyl-tRNA by promoting its recognition by IF2 and preventing the misappropriation of this tRNA by the elongation apparatus. This Desulfotalea psychrophila (strain LSv54 / DSM 12343) protein is Methionyl-tRNA formyltransferase.